Consider the following 232-residue polypeptide: Phosphoadenosine 5'-phosphosulfate reductase (232 aa).

Cys-228 serves as the catalytic Nucleophile; cysteine thiosulfonate intermediate.

Belongs to the PAPS reductase family. CysH subfamily.

It localises to the cytoplasm. The enzyme catalyses [thioredoxin]-disulfide + sulfite + adenosine 3',5'-bisphosphate + 2 H(+) = [thioredoxin]-dithiol + 3'-phosphoadenylyl sulfate. The protein operates within sulfur metabolism; hydrogen sulfide biosynthesis; sulfite from sulfate: step 3/3. In terms of biological role, catalyzes the formation of sulfite from phosphoadenosine 5'-phosphosulfate (PAPS) using thioredoxin as an electron donor. The protein is Phosphoadenosine 5'-phosphosulfate reductase of Synechococcus sp. (strain ATCC 27144 / PCC 6301 / SAUG 1402/1) (Anacystis nidulans).